The following is a 198-amino-acid chain: Angiopoietin-like protein 8 (198 aa).

An N-terminal signal peptide occupies residues 1-15 (MAVLALCLLWTLASA).

The protein belongs to the ANGPTL8 family. Interacts with ANGPTL3. Proteolytically cleaved at the N-terminus. In terms of tissue distribution, expressed in liver and fat. Enriched in white and brown adipose tissues.

It localises to the secreted. In terms of biological role, hormone that acts as a blood lipid regulator by regulating serum triglyceride levels. May be involved in the metabolic transition between fasting and refeeding: required to direct fatty acids to adipose tissue for storage in the fed state. According to a report, may act by promoting ANGPTL3 cleavage. According to another study, not required for cleavage of ANGPTL3. In Mus musculus (Mouse), this protein is Angiopoietin-like protein 8.